The chain runs to 597 residues: Aspartate--tRNA ligase (597 aa).

L-aspartate is bound at residue E180. Residues 204–207 (QLFK) form an aspartate region. R226 provides a ligand contact to L-aspartate. Residues 226–228 (RDE) and Q235 each bind ATP. L-aspartate is bound at residue H454. E488 is a binding site for ATP. R495 contributes to the L-aspartate binding site. ATP is bound at residue 540–543 (GLDR).

The protein belongs to the class-II aminoacyl-tRNA synthetase family. Type 1 subfamily. As to quaternary structure, homodimer.

Its subcellular location is the cytoplasm. The enzyme catalyses tRNA(Asp) + L-aspartate + ATP = L-aspartyl-tRNA(Asp) + AMP + diphosphate. In terms of biological role, catalyzes the attachment of L-aspartate to tRNA(Asp) in a two-step reaction: L-aspartate is first activated by ATP to form Asp-AMP and then transferred to the acceptor end of tRNA(Asp). The protein is Aspartate--tRNA ligase of Clostridium perfringens (strain ATCC 13124 / DSM 756 / JCM 1290 / NCIMB 6125 / NCTC 8237 / Type A).